Reading from the N-terminus, the 151-residue chain is Large ribosomal subunit protein bL9 (151 aa).

This sequence belongs to the bacterial ribosomal protein bL9 family.

Binds to the 23S rRNA. The chain is Large ribosomal subunit protein bL9 from Prochlorococcus marinus (strain MIT 9312).